The primary structure comprises 628 residues: (+)-alpha-pinene synthase, chloroplastic (628 aa).

The N-terminal 48 residues, 1-48 (MALVSAVPLNSKLCLRRTLFGFSHELKAIHSTVPNLGMCRGGKSIAPS), are a transit peptide targeting the chloroplast. Mg(2+) contacts are provided by Asp379, Asp383, and Asp531. Positions 379 to 383 (DDIYD) match the DDXXD motif motif. Residue Ser539 coordinates K(+).

It belongs to the terpene synthase family. Tpsd subfamily. It depends on Mg(2+) as a cofactor. Mn(2+) is required as a cofactor. Requires K(+) as cofactor.

It localises to the plastid. It is found in the chloroplast. The catalysed reaction is (2E)-geranyl diphosphate = (1R,5R)-alpha-pinene + diphosphate. It participates in terpene metabolism; oleoresin biosynthesis. Involved in defensive oleoresin formation in conifers in response to insect attack or other injury. Involved in monoterpene (C10) olefins biosynthesis. Produces mainly (+)-alpha-pinene (97%) with a small amount of (-)-alpha-pinene (3%). The chain is (+)-alpha-pinene synthase, chloroplastic (PT30) from Pinus taeda (Loblolly pine).